The sequence spans 456 residues: Bifunctional protein GlmU (456 aa).

Positions 1 to 229 are pyrophosphorylase; the sequence is MLNSAMSVVI…ISETDGVNNR (229 aa). UDP-N-acetyl-alpha-D-glucosamine is bound by residues 11–14, Lys-25, Gln-76, 81–82, 103–105, Gly-140, Glu-154, Asn-169, and Asn-227; these read LAAG, GT, and YGD. Asp-105 serves as a coordination point for Mg(2+). A Mg(2+)-binding site is contributed by Asn-227. Positions 230-250 are linker; sequence LQLSRLERIYQAEQAEKLLLS. The segment at 251-456 is N-acetyltransferase; it reads GVMLRDPARF…QGWQRPVKKK (206 aa). UDP-N-acetyl-alpha-D-glucosamine is bound by residues Arg-333 and Lys-351. The Proton acceptor role is filled by His-363. UDP-N-acetyl-alpha-D-glucosamine is bound by residues Tyr-366 and Asn-377. Residues Ala-380, 386 to 387, Ser-405, Ala-423, and Arg-440 contribute to the acetyl-CoA site; that span reads NY.

This sequence in the N-terminal section; belongs to the N-acetylglucosamine-1-phosphate uridyltransferase family. It in the C-terminal section; belongs to the transferase hexapeptide repeat family. In terms of assembly, homotrimer. Mg(2+) serves as cofactor.

Its subcellular location is the cytoplasm. It carries out the reaction alpha-D-glucosamine 1-phosphate + acetyl-CoA = N-acetyl-alpha-D-glucosamine 1-phosphate + CoA + H(+). The enzyme catalyses N-acetyl-alpha-D-glucosamine 1-phosphate + UTP + H(+) = UDP-N-acetyl-alpha-D-glucosamine + diphosphate. It functions in the pathway nucleotide-sugar biosynthesis; UDP-N-acetyl-alpha-D-glucosamine biosynthesis; N-acetyl-alpha-D-glucosamine 1-phosphate from alpha-D-glucosamine 6-phosphate (route II): step 2/2. It participates in nucleotide-sugar biosynthesis; UDP-N-acetyl-alpha-D-glucosamine biosynthesis; UDP-N-acetyl-alpha-D-glucosamine from N-acetyl-alpha-D-glucosamine 1-phosphate: step 1/1. The protein operates within bacterial outer membrane biogenesis; LPS lipid A biosynthesis. Catalyzes the last two sequential reactions in the de novo biosynthetic pathway for UDP-N-acetylglucosamine (UDP-GlcNAc). The C-terminal domain catalyzes the transfer of acetyl group from acetyl coenzyme A to glucosamine-1-phosphate (GlcN-1-P) to produce N-acetylglucosamine-1-phosphate (GlcNAc-1-P), which is converted into UDP-GlcNAc by the transfer of uridine 5-monophosphate (from uridine 5-triphosphate), a reaction catalyzed by the N-terminal domain. The sequence is that of Bifunctional protein GlmU from Salmonella agona (strain SL483).